The following is a 116-amino-acid chain: uncharacterized protein (116 aa).

Residues 1–19 form the signal peptide; that stretch reads MRWDVIILYAISRPYATRR. The tract at residues 18 to 50 is disordered; it reads RRTGSHTHPRDSRYIAANQRRPPSACRVGPSPA.

This is an uncharacterized protein from Saccharomyces cerevisiae (strain ATCC 204508 / S288c) (Baker's yeast).